The sequence spans 217 residues: Large ribosomal subunit protein uL4 (217 aa).

This sequence belongs to the universal ribosomal protein uL4 family. As to quaternary structure, part of the 50S ribosomal subunit.

Its function is as follows. One of the primary rRNA binding proteins, this protein initially binds near the 5'-end of the 23S rRNA. It is important during the early stages of 50S assembly. It makes multiple contacts with different domains of the 23S rRNA in the assembled 50S subunit and ribosome. Functionally, forms part of the polypeptide exit tunnel. The chain is Large ribosomal subunit protein uL4 from Koribacter versatilis (strain Ellin345).